The sequence spans 184 residues: Transposon Tn917 resolvase (184 aa).

One can recognise a Resolvase/invertase-type recombinase catalytic domain in the interval 1 to 134; that stretch reads MIFGYARVST…SGLKAARVRG (134 aa). Catalysis depends on S9, which acts as the O-(5'-phospho-DNA)-serine intermediate. The segment at residues 161–180 is a DNA-binding region (H-T-H motif); sequence IRQILDASKLSKTTFYRYLN.

The protein belongs to the site-specific recombinase resolvase family.

Resolvase catalyzes the resolution (a site-specific recombination) of the cointegrated replicon to yield the final transposition products. The sequence is that of Transposon Tn917 resolvase (tnpR) from Enterococcus faecalis (Streptococcus faecalis).